The primary structure comprises 267 residues: Tryptophan synthase alpha chain (267 aa).

Residues glutamate 49 and aspartate 60 each act as proton acceptor in the active site.

Belongs to the TrpA family. As to quaternary structure, tetramer of two alpha and two beta chains.

The enzyme catalyses (1S,2R)-1-C-(indol-3-yl)glycerol 3-phosphate + L-serine = D-glyceraldehyde 3-phosphate + L-tryptophan + H2O. The protein operates within amino-acid biosynthesis; L-tryptophan biosynthesis; L-tryptophan from chorismate: step 5/5. In terms of biological role, the alpha subunit is responsible for the aldol cleavage of indoleglycerol phosphate to indole and glyceraldehyde 3-phosphate. The polypeptide is Tryptophan synthase alpha chain (Geotalea uraniireducens (strain Rf4) (Geobacter uraniireducens)).